Consider the following 559-residue polypeptide: Putative ankyrin repeat protein RBE_0902 (559 aa).

10 ANK repeats span residues 11 to 40 (DGWT…EQAI), 46 to 75 (DGNT…DQAI), 81 to 110 (DGNT…TKQN), 158 to 189 (DDWT…VINH), 228 to 257 (NNDT…DQAI), 263 to 292 (DGNT…DQAI), 298 to 327 (YGNT…EQAI), 333 to 364 (QCDT…AINC), 372 to 402 (FGFT…EVII), and 524 to 554 (IDNN…WGLE).

The sequence is that of Putative ankyrin repeat protein RBE_0902 from Rickettsia bellii (strain RML369-C).